A 200-amino-acid chain; its full sequence is Mediator of RNA polymerase II transcription subunit 29 (200 aa).

2 stretches are compositionally biased toward low complexity: residues 1–20 (MAASQQQASATTSTASVSGP) and 36–48 (AQLVGPAQSGLLQ). Positions 1-48 (MAASQQQASATTSTASVSGPGSAGGSGPQQQPQPPAQLVGPAQSGLLQ) are disordered. Alanine 2 carries the post-translational modification N-acetylalanine.

This sequence belongs to the Mediator complex subunit 29 family. In terms of assembly, component of the TRAP/SMCC mediator complex. Interacts with MED20/TRFP. Associates with the MED18-MED20 heteromer.

It localises to the nucleus. Component of the mediator complex, a complex that can either repress or activate transcription. Mediator complexes are essential for basal and regulated expression of nearly all RNA polymerase II-dependent genes. They may act as a bridge, conveying regulatory information from enhancers and other control elements to the promoter. The polypeptide is Mediator of RNA polymerase II transcription subunit 29 (MED29) (Bos taurus (Bovine)).